Reading from the N-terminus, the 23-residue chain is Caerulein precursor fragment R6 (23 aa).

Expressed by the skin glands.

The protein resides in the secreted. Functionally, antimicrobial peptide. The protein is Caerulein precursor fragment R6 of Xenopus ruwenzoriensis (Uganda clawed frog).